The primary structure comprises 337 residues: RNA 3'-terminal phosphate cyclase (337 aa).

ATP is bound by residues Gln101 and 282 to 285; that span reads HMSD. His306 acts as the Tele-AMP-histidine intermediate in catalysis.

This sequence belongs to the RNA 3'-terminal cyclase family. Type 1 subfamily.

Its subcellular location is the cytoplasm. It carries out the reaction a 3'-end 3'-phospho-ribonucleotide-RNA + ATP = a 3'-end 2',3'-cyclophospho-ribonucleotide-RNA + AMP + diphosphate. Its function is as follows. Catalyzes the conversion of 3'-phosphate to a 2',3'-cyclic phosphodiester at the end of RNA. The mechanism of action of the enzyme occurs in 3 steps: (A) adenylation of the enzyme by ATP; (B) transfer of adenylate to an RNA-N3'P to produce RNA-N3'PP5'A; (C) and attack of the adjacent 2'-hydroxyl on the 3'-phosphorus in the diester linkage to produce the cyclic end product. The biological role of this enzyme is unknown but it is likely to function in some aspects of cellular RNA processing. The chain is RNA 3'-terminal phosphate cyclase from Saccharolobus islandicus (strain M.16.4 / Kamchatka #3) (Sulfolobus islandicus).